The primary structure comprises 95 residues: Defensin-1 (95 aa).

An N-terminal signal peptide occupies residues 1–19 (MKIYFIVGLLFMAMVAIMA). Residues 20 to 43 (APVEDEFEPLEHFENEERADRHRR) constitute a propeptide that is removed on maturation. 3 disulfide bridges follow: cysteine 46-cysteine 74, cysteine 60-cysteine 79, and cysteine 64-cysteine 81. Position 94 is a phenylalanine amide (phenylalanine 94).

The protein localises to the secreted. Functionally, found in royal jelly and in hemolymph, potent antibacterial protein against Gram-positive bacteria at low concentration. In Apis mellifera carnica (Carniolan honeybee), this protein is Defensin-1.